Reading from the N-terminus, the 99-residue chain is NADH-quinone oxidoreductase subunit K (99 aa).

The next 3 membrane-spanning stretches (helical) occupy residues proline 3–leucine 23, isoleucine 28–phenylalanine 48, and valine 59–isoleucine 79.

It belongs to the complex I subunit 4L family. As to quaternary structure, NDH-1 is composed of 14 different subunits. Subunits NuoA, H, J, K, L, M, N constitute the membrane sector of the complex.

It localises to the cell membrane. The catalysed reaction is a quinone + NADH + 5 H(+)(in) = a quinol + NAD(+) + 4 H(+)(out). NDH-1 shuttles electrons from NADH, via FMN and iron-sulfur (Fe-S) centers, to quinones in the respiratory chain. The immediate electron acceptor for the enzyme in this species is believed to be a menaquinone. Couples the redox reaction to proton translocation (for every two electrons transferred, four hydrogen ions are translocated across the cytoplasmic membrane), and thus conserves the redox energy in a proton gradient. This Mycobacterium sp. (strain KMS) protein is NADH-quinone oxidoreductase subunit K.